We begin with the raw amino-acid sequence, 401 residues long: Acetylornithine aminotransferase (401 aa).

Pyridoxal 5'-phosphate is bound by residues 121 to 122 (GA) and Phe154. Position 157 (Arg157) interacts with N(2)-acetyl-L-ornithine. Pyridoxal 5'-phosphate is bound at residue 239–242 (DEVQ). Lys268 bears the N6-(pyridoxal phosphate)lysine mark. Ser296 lines the N(2)-acetyl-L-ornithine pocket. Thr297 is a binding site for pyridoxal 5'-phosphate.

The protein belongs to the class-III pyridoxal-phosphate-dependent aminotransferase family. ArgD subfamily. As to quaternary structure, homodimer. Pyridoxal 5'-phosphate serves as cofactor.

The protein localises to the cytoplasm. The enzyme catalyses N(2)-acetyl-L-ornithine + 2-oxoglutarate = N-acetyl-L-glutamate 5-semialdehyde + L-glutamate. The protein operates within amino-acid biosynthesis; L-arginine biosynthesis; N(2)-acetyl-L-ornithine from L-glutamate: step 4/4. The polypeptide is Acetylornithine aminotransferase (Myxococcus xanthus).